We begin with the raw amino-acid sequence, 982 residues long: MSLPSLANLPATLLPAAERAGTALRSAVAALDAAALARLEAWPEERLEDFRRVAAASDFVAEQAVRDSAMLLELAERGELENPHAPGELRSQLQARLEDCADEDELGRRLRRFRTRQQLRIIWRDLTRRAALAETCRDLSALADACIDLACEWLHRRQCEQFGTPIGRRSGEPQRMVVLGMGKLGAVELNLSSDIDLIFGYPEGGETEGAKRSLDNQEFFTRLGQKLIKALDAITVDGFVFRVDMRLRPYGSSGPLVYSFAALEQYYQDQGRDWERYAMIKARVVGGDQQAGEQLLGMLRPFVYRRYLDFSAIEALRTMKQLIQQEVRRKGMSENIKLGEGGIREVEFIAQAFQLIHGGRDLSLQQRPLLKVLATLEGQGYLPPAVVEELRGGYEFLRYAEHAIQALADRQTQMLPSDEYDRIRVAFIMGFASWAAFHERLSHWRARIDWHFRQVIADPDEDESGEAACGSVGAEWIPLWEEALDEESASRQLADAGFVDAEAAWKRLSDLRHGPQVRAMQRLGRERLDAFVPRLLAMTVENPQPDLVLERVLPLVEAVARRSAYLVLLTENPGALERLLTLCAASPMVAEQIARFPILLDELLNEGRLFRPPQAAELAAELRERLMRIPEDDLEQQMETLRHFKLAHGLRVAASEIAGTLPLMKVSDYLTWLAEAILVEVLELAWRQLVQRHGRPLRADGTPCDPDFVIVGYGKVGGLEFGHGSDLDLVFIHDGDPQCETDGGKSIDGAQFFTRLGQKIIHFLTAQTPSGTLYEVDMRLRPSGAAGLLVSSLGAFQRYQEQEAWTWEHQALVRARVLAGCRRVQASFEAVRAEVLARPRDLDALRTEVSEMRAKMRDNLGTRATAAGTASNAFEATAAFDLKHDAGGIVDIEFMVQYAVLAWSGEHPALLEFTDNIRILEGLERAGLIASEDVRLLQEAYKAYRAAAHRLALQKEAGVVSGEHFQTERREVIRIWRELRLG.

The tract at residues 1-460 is adenylyl removase; the sequence is MSLPSLANLP…HFRQVIADPD (460 aa). The interval 473–982 is adenylyl transferase; the sequence is GAEWIPLWEE…IRIWRELRLG (510 aa).

This sequence belongs to the GlnE family. Mg(2+) is required as a cofactor.

The enzyme catalyses [glutamine synthetase]-O(4)-(5'-adenylyl)-L-tyrosine + phosphate = [glutamine synthetase]-L-tyrosine + ADP. The catalysed reaction is [glutamine synthetase]-L-tyrosine + ATP = [glutamine synthetase]-O(4)-(5'-adenylyl)-L-tyrosine + diphosphate. Functionally, involved in the regulation of glutamine synthetase GlnA, a key enzyme in the process to assimilate ammonia. When cellular nitrogen levels are high, the C-terminal adenylyl transferase (AT) inactivates GlnA by covalent transfer of an adenylyl group from ATP to specific tyrosine residue of GlnA, thus reducing its activity. Conversely, when nitrogen levels are low, the N-terminal adenylyl removase (AR) activates GlnA by removing the adenylyl group by phosphorolysis, increasing its activity. The regulatory region of GlnE binds the signal transduction protein PII (GlnB) which indicates the nitrogen status of the cell. The sequence is that of Bifunctional glutamine synthetase adenylyltransferase/adenylyl-removing enzyme from Pseudomonas aeruginosa (strain ATCC 15692 / DSM 22644 / CIP 104116 / JCM 14847 / LMG 12228 / 1C / PRS 101 / PAO1).